The primary structure comprises 860 residues: Leucine--tRNA ligase (860 aa).

The 'HIGH' region signature appears at 42-52 (PYPSGRLHMGH). The 'KMSKS' region motif lies at 619-623 (KMSKS). Lysine 622 lines the ATP pocket.

The protein belongs to the class-I aminoacyl-tRNA synthetase family.

Its subcellular location is the cytoplasm. It carries out the reaction tRNA(Leu) + L-leucine + ATP = L-leucyl-tRNA(Leu) + AMP + diphosphate. The protein is Leucine--tRNA ligase of Pasteurella multocida (strain Pm70).